The following is a 555-amino-acid chain: MVSAKKVPAIAMSFGVSFALLHFLCLAACLNESPGQNQKEEKLCPENFTRILDSLLDGYDNRLRPGFGGPVTEVKTDIYVTSFGPVSDVEMEYTMDVFFRQTWIDKRLKYDGPIEILRLNNMMVTKVWTPDTFFRNGKKSVSHNMTAPNKLFRIMRNGTILYTMRLTISAECPMRLVDFPMDGHACPLKFGSYAYPKSEMIYTWTKGPEKSVEVPKESSSLVQYDLIGQTVSSETIKSITGEYIVMTVYFHLRRKMGYFMIQTYIPCIMTVILSQVSFWINKESVPARTVFGITTVLTMTTLSISARHSLPKVSYATAMDWFIAVCFAFVFSALIEFAAVNYFTNVQMEKAKRKTSKAPQEISAAPVLREKHPETPLQNTNANLSMRKRANALVHSESDVGSRTDVGNHSSKSSTVVQGSSEATPQSYLASSPNPFSRANAAETISAARAIPSALPSTPSRTGYVPRQVPVGSASTQHVFGSRLQRIKTTVNSIGTSGKLSATTTPSAPPPSGSGTSKIDKYARILFPVTFGAFNMVYWVVYLSKDTMEKSESLM.

A signal peptide spans 1–35 (MVSAKKVPAIAMSFGVSFALLHFLCLAACLNESPG). Topologically, residues 36–259 (QNQKEEKLCP…FHLRRKMGYF (224 aa)) are extracellular. An N-linked (GlcNAc...) asparagine glycan is attached at Asn-47. Residue Arg-100 participates in 4-aminobutanoate binding. 2 N-linked (GlcNAc...) asparagine glycosylation sites follow: Asn-144 and Asn-157. Thr-163 lines the 4-aminobutanoate pocket. Residues Cys-172 and Cys-186 are joined by a disulfide bond. A helical transmembrane segment spans residues 260-280 (MIQTYIPCIMTVILSQVSFWI). Residues 281 to 284 (NKES) are Cytoplasmic-facing. A helical membrane pass occupies residues 285 to 305 (VPARTVFGITTVLTMTTLSIS). At 306 to 318 (ARHSLPKVSYATA) the chain is on the extracellular side. A helical transmembrane segment spans residues 319–341 (MDWFIAVCFAFVFSALIEFAAVN). Over 342 to 518 (YFTNVQMEKA…PPPSGSGTSK (177 aa)) the chain is Cytoplasmic. Disordered stretches follow at residues 354-435 (KTSK…SPNP) and 495-516 (GTSGKLSATTTPSAPPPSGSGT). A compositionally biased stretch (low complexity) spans 410 to 421 (SSKSSTVVQGSS). Polar residues predominate over residues 422–435 (EATPQSYLASSPNP). The chain crosses the membrane as a helical span at residues 519 to 545 (IDKYARILFPVTFGAFNMVYWVVYLSK). Residues 546-555 (DTMEKSESLM) lie on the Extracellular side of the membrane.

The protein belongs to the ligand-gated ion channel (TC 1.A.9) family. Gamma-aminobutyric acid receptor (TC 1.A.9.5) subfamily. GABRA4 sub-subfamily. As to quaternary structure, heteropentamer, formed by a combination of alpha (GABRA1-6), beta (GABRB1-3), gamma (GABRG1-3), delta (GABRD), epsilon (GABRE), rho (GABRR1-3), pi (GABRP) and theta (GABRQ) chains, each subunit exhibiting distinct physiological and pharmacological properties. As to expression, expressed in the brain.

The protein resides in the cell membrane. It is found in the postsynaptic cell membrane. The enzyme catalyses chloride(in) = chloride(out). With respect to regulation, potentiated by histamine. In terms of biological role, alpha subunit of the heteropentameric ligand-gated chloride channel gated by gamma-aminobutyric acid (GABA), a major inhibitory neurotransmitter in the brain. GABA-gated chloride channels, also named GABA(A) receptors (GABAAR), consist of five subunits arranged around a central pore and contain GABA active binding site(s) located at the alpha and beta subunit interface(s). When activated by GABA, GABAARs selectively allow the flow of chloride anions across the cell membrane down their electrochemical gradient. GABAARs containing alpha-4 are predominantly extrasynaptic, contributing to tonic inhibition in dentate granule cells and thalamic relay neurons. Extrasynaptic alpha-4-containing GABAARs control levels of excitability and network activity. GABAARs containing alpha-4 are often found with the delta or gamma-2 subunits, in combination with beta subunits. GABAAR containing alpha-4-beta-3-delta subunits can simultaneously bind GABA and histamine where histamine binds at the interface of two neighboring beta subunits, which may be involved in the regulation of sleep and wakefulness. The chain is Gamma-aminobutyric acid receptor subunit alpha-4 (GABRA4) from Bos taurus (Bovine).